A 166-amino-acid chain; its full sequence is RNA polymerase sigma factor SigV (166 aa).

A Polymerase core binding motif is present at residues 38–51 (DIVQESIKKALSSV). The segment at residues 131–150 (LEEIAEITGENTNTVKTRLY) is a DNA-binding region (H-T-H motif).

The protein belongs to the sigma-70 factor family. ECF subfamily. In terms of assembly, interacts with RsiV.

Sigma factors are initiation factors that promote the attachment of RNA polymerase to specific initiation sites and are then released. Positively regulates the expression of proteins involved in stress responses against bacitracin, paraquat and tellurite. This chain is RNA polymerase sigma factor SigV (sigV), found in Bacillus subtilis (strain 168).